We begin with the raw amino-acid sequence, 146 residues long: MMDINEIREYLPHRYPFLLVDRVTELDFEAQSIRAYKNVSINEPFFNGHFPAHPIMPGVLIIEAMAQAAGILGFKMLDAKPADGTLYYFVGSDKLRFRQPVLPGDQLVLEAKFLSRKSMIWKFECRALVDGKPVCSAEITCAERSL.

H49 is an active-site residue.

The protein belongs to the thioester dehydratase family. FabZ subfamily.

The protein localises to the cytoplasm. It carries out the reaction a (3R)-hydroxyacyl-[ACP] = a (2E)-enoyl-[ACP] + H2O. Its function is as follows. Involved in unsaturated fatty acids biosynthesis. Catalyzes the dehydration of short chain beta-hydroxyacyl-ACPs and long chain saturated and unsaturated beta-hydroxyacyl-ACPs. In Pseudomonas entomophila (strain L48), this protein is 3-hydroxyacyl-[acyl-carrier-protein] dehydratase FabZ.